A 145-amino-acid chain; its full sequence is MKTFLTEQQIKVLVLRAKGLKQSEIARILKTTRANVSILEKRALEKIEKARNTLLLWEQINSKVSVSVKAGEDIFTIPDRLFKEADKAGVKVPYSTAEIIAFLVEHAPIEDRLAKRDFVIFLDSKNRLRISECLINFVEEGIGND.

Belongs to the Tfx family.

In terms of biological role, putative transcriptional regulator. This is Putative transcriptional regulatory protein PYRAB13000 from Pyrococcus abyssi (strain GE5 / Orsay).